A 214-amino-acid polypeptide reads, in one-letter code: Probable GTP-binding protein EngB (214 aa).

One can recognise an EngB-type G domain in the interval 25–203; it reads EGAEVAFAGR…EQVITGWLNL (179 aa). Residues 33–40, 60–64, 80–83, 147–150, and 182–184 each bind GTP; these read GRSNAGKS, GRTQL, DLPG, TKSD, and FSS. The Mg(2+) site is built by Ser-40 and Thr-62.

Belongs to the TRAFAC class TrmE-Era-EngA-EngB-Septin-like GTPase superfamily. EngB GTPase family. Mg(2+) is required as a cofactor.

In terms of biological role, necessary for normal cell division and for the maintenance of normal septation. The protein is Probable GTP-binding protein EngB of Teredinibacter turnerae (strain ATCC 39867 / T7901).